The chain runs to 378 residues: MPYSSLHPSIPQPRGLRAQVAALVLLGACLVALWGLGELPEYTLRWLVLHLASQQIGLLVKGLCSLAEELCHVHSRYQSSYWRAARACLGCPIRCGALLLLSCYFYFSIRDKAGLPLPWMLALLGLSQALNILLGLQHLAPAEVSAICEKRNFNVAHGLAWSYYIGYLRLILPGLRARIQAYNQRHKNVLGGIGNHRLHILFPLDCGVPDDLSVADPNIRFLHELPQQSADRAGIKGRVYTNSIYELLENGQPAGVCVLGYATPLQTLFAMSQDGRAGFSREDRLEQAKLFCRTLEDILADAPEAQNNCRLIVYQEPTEGGSFSLSQEILRHLRQEEREVTMGSAETSVVPTSSTLSQEPELLISGMEQPLPLRSDIF.

Residues 1 to 17 (MPYSSLHPSIPQPRGLR) lie on the Cytoplasmic side of the membrane. The mediates interaction with ZDHHC1 and ZDHHC11 stretch occupies residues 1–190 (MPYSSLHPSI…AYNQRHKNVL (190 aa)). A helical membrane pass occupies residues 18-34 (AQVAALVLLGACLVALW). The Lumenal portion of the chain corresponds to 35–44 (GLGELPEYTL). The helical transmembrane segment at 45 to 69 (RWLVLHLASQQIGLLVKGLCSLAEE) threads the bilayer. Residues 70–91 (LCHVHSRYQSSYWRAARACLGC) lie on the Cytoplasmic side of the membrane. Residues Cys-88 and Cys-91 are each lipidated (S-palmitoyl cysteine). A helical membrane pass occupies residues 92-106 (PIRCGALLLLSCYFY). Topologically, residues 107–116 (FSIRDKAGLP) are lumenal. A helical transmembrane segment spans residues 117–134 (LPWMLALLGLSQALNILL). Residues 135–378 (GLQHLAPAEV…QPLPLRSDIF (244 aa)) are Cytoplasmic-facing. Lys-150 participates in a covalent cross-link: Glycyl lysine isopeptide (Lys-Gly) (interchain with G-Cter in ubiquitin). Positions 153-339 (FNVAHGLAWS…LRHLRQEERE (187 aa)) are cyclic dinucleotide-binding domain (CBD). Residues Ser-162 and Tyr-167 each contribute to the 2',3'-cGAMP site. 3',3'-c-di-GMP is bound by residues Ser-162 and Tyr-167. Residue Tyr-167 participates in 2',3'-cUAMP binding. Lys-236 is covalently cross-linked (Glycyl lysine isopeptide (Lys-Gly) (interchain with G-Cter in ubiquitin)). Residues Arg-238 and Thr-263 each contribute to the 2',3'-cGAMP site. The 2',3'-cUAMP site is built by Arg-238 and Thr-263. 3',3'-c-di-GMP-binding positions include 238 to 241 (RVYT) and Thr-263. Residues 339 to 378 (EVTMGSAETSVVPTSSTLSQEPELLISGMEQPLPLRSDIF) are C-terminal tail (CTT). Ser-354 carries the phosphoserine modification. Thr-355 carries the post-translational modification Phosphothreonine. A phosphoserine; by TBK1 mark is found at Ser-357 and Ser-365. Positions 362–365 (LLIS) match the pLxIS motif motif.

This sequence belongs to the STING family. In terms of assembly, homodimer; forms a homodimer in absence of cyclic nucleotide (c-di-GMP or cGAMP); 'Lys-63'-linked ubiquitination at Lys-150 is required for homodimerization. Homotetramer; in presence of cyclic nucleotide (c-di-GMP or cGAMP), forms tetramers and higher-order oligomers through side-by-side packing. Interacts (when phosphorylated) with IRF3; following activation and phosphorylation on the pLxIS motif by TBK1, recruits IRF3. Interacts with DDX58/RIG-I, MAVS and SSR2. Interacts with RNF5 and TRIM56. Interacts with TBK1; when homodimer, leading to subsequent production of IFN-beta. Interacts with IFIT1 and IFIT2. Interacts with TRIM29; this interaction induces STING1 ubiquitination and subsequent degradation. Associates with the MHC-II complex. Interacts with STEEP1; interaction takes place upon cGAMP-activation and STING1 phosphorylation by MAP3K7/TAK1 and promotes STING1 translocation to COPII vesicles. Interacts with SEC24A, SEC24B and SEC24C; promoting translocation to COPII vesicles. Interacts (when ubiquitinated) with SQSTM1; leading to relocalization to autophagosomes. Interacts with SURF4. Interacts with HNRNPA2B1. Interacts with ZDHHC1; ZDHHC1 constitutively interacts with STING1 and in presence of DNA viruses activates it by promoting its cGAMP-induced oligomerization and the recruitment of downstream signaling components. Interacts with ZDHHC11; in presence of DNA viruses promotes the recruitment of IRF3 to STING1. Interacts with TOMM70. Interacts with TAB1; promoting recruitment of TAB1 to the endoplasmic reticulum membrane and subsequent activation of MAP3K7/TAK1. Interacts (via transmembrane domain) with TMEM203. Interacts with DDX41. (Microbial infection) Interacts with African swine fever virus/ASFV protein A528R; this interaction mediates STING1 degradation. As to quaternary structure, (Microbial infection) Interacts with African swine fever virus/ASFV minor capsid protein p17. In terms of assembly, (Microbial infection) Interacts with Pseudorabies virus protein UL13; this interaction mediates STING1 degradation in a RNF5-dependent manner. In terms of processing, phosphorylation by TBK1 leads to activation and production of IFN-beta. Following cyclic nucleotide (c-di-GMP or cGAMP)-binding, activation and translocation from the endoplasmic reticulum, STING1 is phosphorylated by TBK1 at Ser-365 in the pLxIS motif. The phosphorylated pLxIS motif constitutes an IRF3-binding motif, leading to recruitment of the transcription factor IRF3 to induce type-I interferons and other cytokines. Phosphorylated on tyrosine residues upon MHC-II aggregation. Dephosphorylation by PPP6C leads to inactivation and decreased production of IFN-beta. Phosphorylation at Ser-357 is also required to activate IRF3. Phosphorylation at Ser-354 by MAP3K7/TAK1 facilitates its interaction with STEEP1, promoting STING1 translocation to COPII vesicles. Ubiquitinated. Ubiquitinated via 'Lys-63'-linked ubiquitin chains in response to double-stranded DNA treatment, leading to relocalization to autophagosomes and subsequent degradation; this process is dependent on SQSTM1. 'Lys-63'-linked ubiquitination mediated by TRIM56 at Lys-150 promotes homodimerization and recruitment of the antiviral kinase TBK1 and subsequent production of IFN-beta. 'Lys-48'-linked polyubiquitination at Lys-150 occurring after viral infection is mediated by RNF5 and leads to proteasomal degradation. 'Lys-11'-linked polyubiquitination at Lys-150 by RNF26 leads to stabilize STING1: it protects STING1 from RNF5-mediated 'Lys-48'-linked polyubiquitination. 'Lys-33'-linked and 'Lys-48'-linked deubiquitinated by USP20; leading to its stabilization and promotion of innate antiviral response. 'Lys-48'-linked deubiquitinated by USP44; leading to its stabilization and promotion of innate antiviral response. Deubiquitinated by USP13; leading to inhibition of innate antiviral response. 'Lys-63'-linked deubiquitinated by USP49; leading to inhibition of the subsequent recruitment of TBK1 to the signaling complex. 'Lys-63'-linked ubiquitination mediated by RNF39 promotes the activation of the cGAS-STING pathway. Post-translationally, palmitoylation takes place in the Golgi apparatus and creates a platform for the recruitment of TBK1. As to expression, expressed at higher level in the spleen, lymph node, lung and bone marrow, followed by the small intestine, heart, liver and brain, and to a lesser extent in the stomach and kidney.

It is found in the endoplasmic reticulum membrane. Its subcellular location is the cytoplasm. The protein resides in the perinuclear region. It localises to the endoplasmic reticulum-Golgi intermediate compartment membrane. The protein localises to the golgi apparatus membrane. It is found in the cytoplasmic vesicle. Its subcellular location is the autophagosome membrane. The protein resides in the mitochondrion outer membrane. It localises to the cell membrane. The enzyme catalyses H(+)(in) = H(+)(out). Functionally, facilitator of innate immune signaling that acts as a sensor of cytosolic DNA from bacteria and viruses and promotes the production of type I interferon (IFN-alpha and IFN-beta). Innate immune response is triggered in response to non-CpG double-stranded DNA from viruses and bacteria delivered to the cytoplasm. Acts by binding cyclic dinucleotides: recognizes and binds cyclic di-GMP (c-di-GMP), a second messenger produced by bacteria, cyclic UMP-AMP (2',3'-cUAMP), and cyclic GMP-AMP (cGAMP), a messenger produced by CGAS in response to DNA virus in the cytosol. Upon binding to c-di-GMP, cUAMP or cGAMP, STING1 oligomerizes, translocates from the endoplasmic reticulum and is phosphorylated by TBK1 on the pLxIS motif, leading to recruitment and subsequent activation of the transcription factor IRF3 to induce expression of type I interferon and exert a potent anti-viral state. Exhibits 2',3' phosphodiester linkage-specific ligand recognition: can bind both 2'-3' linked cGAMP (2'-3'-cGAMP) and 3'-3' linked cGAMP but is preferentially activated by 2'-3' linked cGAMP. The preference for 2'-3'-cGAMP, compared to other linkage isomers is probably due to the ligand itself, whichs adopts an organized free-ligand conformation that resembles the STING1-bound conformation and pays low energy costs in changing into the active conformation. In addition to promote the production of type I interferons, plays a direct role in autophagy. Following cGAMP-binding, STING1 buds from the endoplasmic reticulum into COPII vesicles, which then form the endoplasmic reticulum-Golgi intermediate compartment (ERGIC). The ERGIC serves as the membrane source for WIPI2 recruitment and LC3 lipidation, leading to formation of autophagosomes that target cytosolic DNA or DNA viruses for degradation by the lysosome. Promotes autophagy by acting as a proton channel that directs proton efflux from the Golgi to facilitate MAP1LC3B/LC3B lipidation. The autophagy- and interferon-inducing activities can be uncoupled and autophagy induction is independent of TBK1 phosphorylation. Autophagy is also triggered upon infection by bacteria: following c-di-GMP-binding, which is produced by live Gram-positive bacteria, promotes reticulophagy. May be involved in translocon function, the translocon possibly being able to influence the induction of type I interferons. May be involved in transduction of apoptotic signals via its association with the major histocompatibility complex class II (MHC-II). The protein is Stimulator of interferon genes protein of Sus scrofa (Pig).